A 333-amino-acid polypeptide reads, in one-letter code: Electron transfer flavoprotein subunit alpha, mitochondrial (333 aa).

Residues 1-19 (MFRAAAPGQLRRAASLLRF) constitute a mitochondrion transit peptide. The interval 20–204 (QSTLVIAEHA…GISEWLDQKL (185 aa)) is domain I. Lysine 59 is modified (N6-acetyllysine; alternate). Residue lysine 59 is modified to N6-succinyllysine; alternate. Residue lysine 62 is modified to N6-acetyllysine. Lysine 69 carries the N6-acetyllysine; alternate modification. Lysine 69 is subject to N6-succinyllysine; alternate. Lysine 75 carries the post-translational modification N6-acetyllysine. Lysine 85 carries the N6-acetyllysine; alternate modification. The residue at position 85 (lysine 85) is an N6-succinyllysine; alternate. Threonine 93 carries the phosphothreonine modification. 2 positions are modified to N6-acetyllysine: lysine 101 and lysine 139. Residue serine 140 is modified to Phosphoserine. Lysine 158 carries the post-translational modification N6-acetyllysine; alternate. Position 158 is an N6-succinyllysine; alternate (lysine 158). An N6-acetyllysine modification is found at lysine 164. Lysine 187 carries the post-translational modification N6-succinyllysine. Lysine 203 carries the post-translational modification N6-acetyllysine; alternate. Lysine 203 carries the post-translational modification N6-succinyllysine; alternate. The tract at residues 205–333 (TKSDRPELTG…PEMTEILKKK (129 aa)) is domain II. Position 216 is an N6-succinyllysine (lysine 216). Arginine 223 contributes to the FAD binding site. N6-acetyllysine; alternate is present on residues lysine 226 and lysine 232. An N6-succinyllysine; alternate mark is found at lysine 226 and lysine 232. FAD contacts are provided by residues serine 248, 263–266 (VGQT), 281–286 (SGAIQH), and asparagine 300. The residue at position 301 (lysine 301) is an N6-succinyllysine. Position 318 to 319 (318 to 319 (DL)) interacts with FAD.

Belongs to the ETF alpha-subunit/FixB family. As to quaternary structure, heterodimer composed of ETFA and ETFB. Identified in a complex that contains ETFA, ETFB and ETFRF1. Interaction with ETFRF1 promotes dissociation of the bound FAD and loss of electron transfer activity. Interacts with TASOR. FAD serves as cofactor.

It is found in the mitochondrion matrix. Heterodimeric electron transfer flavoprotein that accepts electrons from several mitochondrial dehydrogenases, including acyl-CoA dehydrogenases, glutaryl-CoA and sarcosine dehydrogenase. It transfers the electrons to the main mitochondrial respiratory chain via ETF-ubiquinone oxidoreductase (ETF dehydrogenase). Required for normal mitochondrial fatty acid oxidation and normal amino acid metabolism. This Rattus norvegicus (Rat) protein is Electron transfer flavoprotein subunit alpha, mitochondrial (Etfa).